We begin with the raw amino-acid sequence, 363 residues long: 5-hydroxytryptamine receptor 1E (363 aa).

At 1–21 (MNITNCTTEASMAIRPKTITE) the chain is on the extracellular side. N-linked (GlcNAc...) asparagine glycans are attached at residues N2 and N5. The helical transmembrane segment at 22–45 (KMLICMTLVVITTLTTLLNLAVIM) threads the bilayer. At 46-59 (AIGTTKKLHQPANY) the chain is on the cytoplasmic side. The chain crosses the membrane as a helical span at residues 60-84 (LICSLAVTDLLVAVLVMPLSIIYIV). Over 85 to 92 (MDRWKLGY) the chain is Extracellular. A helical membrane pass occupies residues 93–118 (FLCEVWLSVDMTCCTCSILHLCVIAL). Cysteines 95 and 173 form a disulfide. Positions 102 and 106 each coordinate serotonin. A DRY motif; important for ligand-induced conformation changes motif is present at residues 119-121 (DRY). Residues 119–138 (DRYWAITNAIEYARKRTAKR) lie on the Cytoplasmic side of the membrane. The chain crosses the membrane as a helical span at residues 139-157 (AALMILTVWTISIFISMPP). The Extracellular portion of the chain corresponds to 158–179 (LFWRSHRRLSPPPSQCTIQHDH). The chain crosses the membrane as a helical span at residues 180-203 (VIYTIYSTLGAFYIPLTLILILYY). At 204–291 (RIYHAAKSLY…SSTRERKAAR (88 aa)) the chain is on the cytoplasmic side. A helical membrane pass occupies residues 292-316 (ILGLILGAFILSWLPFFIKELIVGL). Residues 317 to 322 (SIYTVS) lie on the Extracellular side of the membrane. The chain crosses the membrane as a helical span at residues 323–345 (SEVADFLTWLGYVNSLINPLLYT). Residues 340–344 (NPLLY) carry the NPxxY motif; important for ligand-induced conformation changes and signaling motif. Residues 346–363 (SFNEDFKLAFKKLIRCRE) lie on the Cytoplasmic side of the membrane.

It belongs to the G-protein coupled receptor 1 family.

The protein resides in the cell membrane. In terms of biological role, G-protein coupled receptor for 5-hydroxytryptamine (serotonin). Also functions as a receptor for various alkaloids and psychoactive substances. Ligand binding causes a conformation change that triggers signaling via guanine nucleotide-binding proteins (G proteins) and modulates the activity of downstream effectors, such as adenylate cyclase. HTR1E is coupled to G(i)/G(o) G alpha proteins and mediates inhibitory neurotransmission by inhibiting adenylate cyclase activity. The protein is 5-hydroxytryptamine receptor 1E (HTR1E) of Pan troglodytes (Chimpanzee).